We begin with the raw amino-acid sequence, 169 residues long: Cytochrome c oxidase subunit 4 isoform 1, mitochondrial (169 aa).

Residues 1 to 22 (MLASRALSLIGKRAISTSVCLR) constitute a mitochondrion transit peptide. At 23–99 (AHGSVVKSED…FAEMNRGTNE (77 aa)) the chain is on the mitochondrial matrix side. An N6-acetyllysine; alternate modification is found at Lys29. Lys29 carries the post-translational modification N6-succinyllysine; alternate. Ser56 and Ser58 each carry phosphoserine. At Lys60 the chain carries N6-acetyllysine; alternate. Lys60 is modified (N6-succinyllysine; alternate). Lys67 is modified (N6-acetyllysine). A helical membrane pass occupies residues 100-125 (WKTVVGMAMFFIGFTALVLIWEKSYV). Topologically, residues 126–169 (YGPIPHTFDRDWVAMQTKRMLDMKANPIQGFSAKWDYDKNEWKK) are mitochondrial intermembrane.

The protein belongs to the cytochrome c oxidase IV family. In terms of assembly, component of the cytochrome c oxidase (complex IV, CIV), a multisubunit enzyme composed of 14 subunits. The complex is composed of a catalytic core of 3 subunits MT-CO1, MT-CO2 and MT-CO3, encoded in the mitochondrial DNA, and 11 supernumerary subunits COX4I, COX5A, COX5B, COX6A, COX6B, COX6C, COX7A, COX7B, COX7C, COX8 and NDUFA4, which are encoded in the nuclear genome. The complex exists as a monomer or a dimer and forms supercomplexes (SCs) in the inner mitochondrial membrane with NADH-ubiquinone oxidoreductase (complex I, CI) and ubiquinol-cytochrome c oxidoreductase (cytochrome b-c1 complex, complex III, CIII), resulting in different assemblies (supercomplex SCI(1)III(2)IV(1) and megacomplex MCI(2)III(2)IV(2)). Interacts with PHB2; the interaction decreases in absence of SPHK2. Interacts with AFG1L. Interacts with ABCB7; this interaction allows the regulation of cellular iron homeostasis and cellular reactive oxygen species (ROS) levels in cardiomyocytes. Interacts with FLVCR2; this interaction occurs in the absence of heme and is disrupted upon heme binding. Interacts with IRGC.

The protein resides in the mitochondrion inner membrane. It participates in energy metabolism; oxidative phosphorylation. In terms of biological role, component of the cytochrome c oxidase, the last enzyme in the mitochondrial electron transport chain which drives oxidative phosphorylation. The respiratory chain contains 3 multisubunit complexes succinate dehydrogenase (complex II, CII), ubiquinol-cytochrome c oxidoreductase (cytochrome b-c1 complex, complex III, CIII) and cytochrome c oxidase (complex IV, CIV), that cooperate to transfer electrons derived from NADH and succinate to molecular oxygen, creating an electrochemical gradient over the inner membrane that drives transmembrane transport and the ATP synthase. Cytochrome c oxidase is the component of the respiratory chain that catalyzes the reduction of oxygen to water. Electrons originating from reduced cytochrome c in the intermembrane space (IMS) are transferred via the dinuclear copper A center (CU(A)) of subunit 2 and heme A of subunit 1 to the active site in subunit 1, a binuclear center (BNC) formed by heme A3 and copper B (CU(B)). The BNC reduces molecular oxygen to 2 water molecules using 4 electrons from cytochrome c in the IMS and 4 protons from the mitochondrial matrix. The sequence is that of Cytochrome c oxidase subunit 4 isoform 1, mitochondrial (Cox4i1) from Mus musculus (Mouse).